The primary structure comprises 978 residues: Chitin synthase 3 (978 aa).

A compositionally biased stretch (low complexity) spans 1-13 (MGFNPQGQGNGPN). Disordered stretches follow at residues 1–95 (MGFN…FDGH) and 108–127 (GHYP…YEYP). Residue Asn-72 is glycosylated (N-linked (GlcNAc...) asparagine). Asn-604 is a glycosylation site (N-linked (GlcNAc...) asparagine). 7 helical membrane passes run 641–661 (LVNV…TTII), 686–706 (IVNV…FVLA), 719–739 (VLSF…TGYL), 775–795 (LIII…FLYL), 803–823 (SFPQ…VYAF), 908–928 (VILW…DDFI), and 946–966 (VLLY…LWFI).

The protein belongs to the chitin synthase family. Class III subfamily.

The protein localises to the cell membrane. It catalyses the reaction [(1-&gt;4)-N-acetyl-beta-D-glucosaminyl](n) + UDP-N-acetyl-alpha-D-glucosamine = [(1-&gt;4)-N-acetyl-beta-D-glucosaminyl](n+1) + UDP + H(+). In terms of biological role, polymerizes chitin, a structural polymer of the cell wall and septum, by transferring the sugar moiety of UDP-GlcNAc to the non-reducing end of the growing chitin polymer. Is essential for viability. In Fusarium oxysporum f. sp. lycopersici (strain 4287 / CBS 123668 / FGSC 9935 / NRRL 34936) (Fusarium vascular wilt of tomato), this protein is Chitin synthase 3.